The primary structure comprises 409 residues: Bone morphogenetic protein 4 (409 aa).

Residues 1–24 (MIPGNRMLMVVLLCQVLLGGASHA) form the signal peptide. Positions 25 to 293 (SLIPETGKKK…ALTRRRRAKR (269 aa)) are excised as a propeptide. Serine 91 is subject to Phosphoserine. N-linked (GlcNAc...) asparagine glycans are attached at residues asparagine 144 and asparagine 209. Residues 284–308 (ALTRRRRAKRSPKHHPQRARKKNKN) are disordered. Intrachain disulfides connect cysteine 309/cysteine 374, cysteine 338/cysteine 406, and cysteine 342/cysteine 408. N-linked (GlcNAc...) asparagine glycosylation is found at asparagine 351 and asparagine 366.

This sequence belongs to the TGF-beta family. In terms of assembly, homodimer; disulfide-linked. Interacts with GREM2. Part of a complex consisting of TWSG1 and CHRD. Interacts with the serine proteases, HTRA1 and HTRA3; the interaction with either inhibits BMP4-mediated signaling. The HTRA protease activity is required for this inhibition. Interacts with SOSTDC1. Interacts with FBN1 (via N-terminal domain) and FBN2. Interacts with type I receptor BMPR1A. Interacts with type II receptor BMPR2. Interacts with FSTL1; this interaction inhibits the activation of the BMP4/Smad1/5/8 signaling pathway. Interacts with SCUBE3. Interacts with TGFBR3.

Its subcellular location is the secreted. The protein localises to the extracellular space. It localises to the extracellular matrix. Functionally, growth factor of the TGF-beta superfamily that plays essential roles in many developmental processes, including neurogenesis, vascular development, angiogenesis and osteogenesis. Acts in concert with PTHLH/PTHRP to stimulate ductal outgrowth during embryonic mammary development and to inhibit hair follicle induction. Initiates the canonical BMP signaling cascade by associating with type I receptor BMPR1A and type II receptor BMPR2. Once all three components are bound together in a complex at the cell surface, BMPR2 phosphorylates and activates BMPR1A. In turn, BMPR1A propagates signal by phosphorylating SMAD1/5/8 that travel to the nucleus and act as activators and repressors of transcription of target genes. Positively regulates the expression of odontogenic development regulator MSX1 via inducing the IPO7-mediated import of SMAD1 to the nucleus. Required for MSX1-mediated mesenchymal molar tooth bud development beyond the bud stage, via promoting Wnt signaling. Acts as a positive regulator of odontoblast differentiation during mesenchymal tooth germ formation, expression is repressed during the bell stage by MSX1-mediated inhibition of CTNNB1 signaling. Able to induce its own expression in dental mesenchymal cells and also in the neighboring dental epithelial cells via an MSX1-mediated pathway. Can also signal through non-canonical BMP pathways such as ERK/MAP kinase, PI3K/Akt, or SRC cascades. For example, induces SRC phosphorylation which, in turn, activates VEGFR2, leading to an angiogenic response. This is Bone morphogenetic protein 4 from Bos taurus (Bovine).